The primary structure comprises 408 residues: Probable E3 ubiquitin-protein ligase makorin-1 (408 aa).

2 consecutive C3H1-type zinc fingers follow at residues 34–61 (WTRHVTCRYFIHGVCKEGINCRYSHDLA) and 63–90 (SRSAMICRYFQRGCCAYGDRCRYEHNKP). Disordered stretches follow at residues 90–114 (PLQEDPTGDTCTAPSESLPEPSGNI) and 154–173 (EAYTQGTVKPDEGREEPADP). Over residues 162–173 (KPDEGREEPADP) the composition is skewed to basic and acidic residues. The C3H1-type 3 zinc-finger motif lies at 174–201 (ELKKQLCPYAAMGECRYGENCVYLHGDP). Positions 202-229 (CDMCGLQVLHPVDTCQRSQHIKSCIEAH) are makorin-type Cys-His. The segment at 247 to 301 (CGICMEVVYEKTNPSERRFGILSNCSHSYCLKCIRKWRSAKQFESKIIKSCPECR) adopts an RING-type zinc-finger fold. The segment at 330-359 (AMSSKSCRYFDEGRGTCPFGGNCFYRHAYP) adopts a C3H1-type 4 zinc-finger fold. A disordered region spans residues 363–408 (IEEPQPRQKSGMSSRYRIPSPSAGIDFGSLTSERAETRLRTRKTKL).

It catalyses the reaction S-ubiquitinyl-[E2 ubiquitin-conjugating enzyme]-L-cysteine + [acceptor protein]-L-lysine = [E2 ubiquitin-conjugating enzyme]-L-cysteine + N(6)-ubiquitinyl-[acceptor protein]-L-lysine.. It functions in the pathway protein modification; protein ubiquitination. E3 ubiquitin ligase catalyzing the covalent attachment of ubiquitin moieties onto substrate proteins. The chain is Probable E3 ubiquitin-protein ligase makorin-1 (mkrn1) from Xenopus laevis (African clawed frog).